The sequence spans 216 residues: Thiamine-phosphate synthase (216 aa).

Residues 41-45 (QLREK) and aspartate 77 contribute to the 4-amino-2-methyl-5-(diphosphooxymethyl)pyrimidine site. The Mg(2+) site is built by aspartate 78 and aspartate 97. A 4-amino-2-methyl-5-(diphosphooxymethyl)pyrimidine-binding site is contributed by serine 116. 143 to 145 (TTS) provides a ligand contact to 2-[(2R,5Z)-2-carboxy-4-methylthiazol-5(2H)-ylidene]ethyl phosphate. 4-amino-2-methyl-5-(diphosphooxymethyl)pyrimidine is bound at residue lysine 146. 2-[(2R,5Z)-2-carboxy-4-methylthiazol-5(2H)-ylidene]ethyl phosphate is bound by residues glycine 174 and 194–195 (IS).

It belongs to the thiamine-phosphate synthase family. Requires Mg(2+) as cofactor.

The enzyme catalyses 2-[(2R,5Z)-2-carboxy-4-methylthiazol-5(2H)-ylidene]ethyl phosphate + 4-amino-2-methyl-5-(diphosphooxymethyl)pyrimidine + 2 H(+) = thiamine phosphate + CO2 + diphosphate. The catalysed reaction is 2-(2-carboxy-4-methylthiazol-5-yl)ethyl phosphate + 4-amino-2-methyl-5-(diphosphooxymethyl)pyrimidine + 2 H(+) = thiamine phosphate + CO2 + diphosphate. It catalyses the reaction 4-methyl-5-(2-phosphooxyethyl)-thiazole + 4-amino-2-methyl-5-(diphosphooxymethyl)pyrimidine + H(+) = thiamine phosphate + diphosphate. It functions in the pathway cofactor biosynthesis; thiamine diphosphate biosynthesis; thiamine phosphate from 4-amino-2-methyl-5-diphosphomethylpyrimidine and 4-methyl-5-(2-phosphoethyl)-thiazole: step 1/1. Functionally, condenses 4-methyl-5-(beta-hydroxyethyl)thiazole monophosphate (THZ-P) and 2-methyl-4-amino-5-hydroxymethyl pyrimidine pyrophosphate (HMP-PP) to form thiamine monophosphate (TMP). This Pediococcus pentosaceus (strain ATCC 25745 / CCUG 21536 / LMG 10740 / 183-1w) protein is Thiamine-phosphate synthase.